A 1260-amino-acid polypeptide reads, in one-letter code: Neural cell adhesion molecule L1 (1260 aa).

The first 19 residues, 1–19 (MVVMLRYVWPLLLCSPCLL), serve as a signal peptide directing secretion. Topologically, residues 20 to 1123 (IQIPDEYKGH…VSTTGSFASE (1104 aa)) are extracellular. 6 Ig-like C2-type domains span residues 35-130 (PVIT…IQLV), 138-225 (PKET…EPID), 239-327 (PRLL…YYVT), 332-419 (PYWL…AYIY), 424-506 (PARI…NNVT), and 517-600 (TQIT…DEVE). 2 disulfide bridges follow: C57–C113 and C157–C208. N-linked (GlcNAc...) asparagine glycans are attached at residues N100, N202, N246, and N293. Disulfide bonds link C263–C311 and C353–C403. Residues N432, N478, N489, and N504 are each glycosylated (N-linked (GlcNAc...) asparagine). A disulfide bridge connects residues C447 and C496. Cysteines 538 and 590 form a disulfide. Short sequence motifs (cell attachment site) lie at residues 553–555 (RGD) and 562–564 (RGD). N-linked (GlcNAc...) asparagine glycosylation is found at N587 and N670. Fibronectin type-III domains follow at residues 613–711 (PVPH…TPEA), 716–809 (NPVD…SGED), 811–916 (PQVS…PEGV), 919–1015 (HPEA…MALF), and 1014–1112 (LFGK…TGPV). A disordered region spans residues 697–724 (GEPSPVSESVVTPEAAPEKNPVDVRGEG). The span at 712-724 (APEKNPVDVRGEG) shows a compositional bias: basic and acidic residues. Residues N725, N776, N824, N848, N875, N968, N978, N1022, N1030, N1073, and N1107 are each glycosylated (N-linked (GlcNAc...) asparagine). A helical transmembrane segment spans residues 1124-1146 (GWFIAFVSAIILLLLILLILCFI). Over 1147-1260 (KRSKGGKYSV…SPINPAVALE (114 aa)) the chain is Cytoplasmic. Phosphoserine is present on residues S1166, S1181, S1184, S1197, S1246, S1247, and S1251. Disordered stretches follow at residues 1183 to 1210 (ESDN…SDDS) and 1229 to 1260 (IGQY…VALE). Polar residues predominate over residues 1244–1253 (NDSSGATSPI).

The protein belongs to the immunoglobulin superfamily. L1/neurofascin/NgCAM family. As to quaternary structure, interacts with SHTN1; the interaction occurs in axonal growth cones. Interacts with isoform 2 of BSG. In terms of tissue distribution, expressed in the brain, including in the molecular layer of the cerebellar cortex, the fiber-rich layers of the hippocampus (alveus, and strata lacunosum moleculare, radiatum, and oriens), the nerve fiber layer and the inner and outer plexiform layers of the retina, and in the molecular layer of the olfactory bulb (at protein level).

Its subcellular location is the cell membrane. The protein resides in the cell projection. It localises to the growth cone. In terms of biological role, neural cell adhesion molecule involved in the dynamics of cell adhesion and in the generation of transmembrane signals at tyrosine kinase receptors. During brain development, critical in multiple processes, including neuronal migration, axonal growth and fasciculation, and synaptogenesis. In the mature brain, plays a role in the dynamics of neuronal structure and function, including synaptic plasticity. This chain is Neural cell adhesion molecule L1 (L1cam), found in Mus musculus (Mouse).